Here is a 148-residue protein sequence, read N- to C-terminus: Large ribosomal subunit protein bL9 (148 aa).

It belongs to the bacterial ribosomal protein bL9 family.

Its function is as follows. Binds to the 23S rRNA. In Caldicellulosiruptor bescii (strain ATCC BAA-1888 / DSM 6725 / KCTC 15123 / Z-1320) (Anaerocellum thermophilum), this protein is Large ribosomal subunit protein bL9.